The sequence spans 392 residues: Phosphoglycerate kinase (392 aa).

Substrate contacts are provided by residues 21-23 (DLN), R36, 59-62 (HLGR), R113, and R146. Residues K197, E319, and 345-348 (GGDT) each bind ATP.

It belongs to the phosphoglycerate kinase family. Monomer.

Its subcellular location is the cytoplasm. It catalyses the reaction (2R)-3-phosphoglycerate + ATP = (2R)-3-phospho-glyceroyl phosphate + ADP. Its pathway is carbohydrate degradation; glycolysis; pyruvate from D-glyceraldehyde 3-phosphate: step 2/5. The polypeptide is Phosphoglycerate kinase (Thioalkalivibrio sulfidiphilus (strain HL-EbGR7)).